The chain runs to 485 residues: Protein hunchback (485 aa).

The tract at residues 1–77 (TSSTARKTPE…EEDDDIRTPK (77 aa)) is disordered. Positions 16 to 37 (QDQNQLLKTPIQTNGNQQSTFD) are enriched in polar residues. Residues 59-72 (ADVDDENDAEEDDD) are compositionally biased toward acidic residues. 4 consecutive C2H2-type zinc fingers follow at residues 87–109 (YKCK…NRIH), 116–138 (LKCQ…LRNH), 144–166 (FQCK…MKSH), and 172–196 (YRCK…KYSH). Disordered regions lie at residues 229–270 (KDEG…PPSS), 318–361 (NGWQ…QVKH), and 398–422 (PKPV…EDDS). Polar residues predominate over residues 257-270 (NFEQSQHVPTPPSS). Over residues 325–335 (NCNEEETPEKE) the composition is skewed to acidic residues. Residues 345 to 358 (DLSSNPSTPSTVSQ) show a composition bias toward polar residues. Over residues 402 to 416 (QLQLPTSSTTTPLKT) the composition is skewed to low complexity. 2 consecutive C2H2-type zinc fingers follow at residues 432–454 (YECK…MGYH) and 460–484 (FKCN…RDAH).

This sequence belongs to the hunchback C2H2-type zinc-finger protein family.

The protein localises to the nucleus. Functionally, gap class segmentation protein that controls development of head structures. This chain is Protein hunchback (hb), found in Clogmia albipunctata (Mothmidge).